A 593-amino-acid polypeptide reads, in one-letter code: Aspartate--tRNA(Asp/Asn) ligase (593 aa).

Position 172 (Glu-172) interacts with L-aspartate. Positions 196 to 199 (QLFK) are aspartate. Arg-218 serves as a coordination point for L-aspartate. Residues 218–220 (RDE) and Gln-227 contribute to the ATP site. Position 450 (His-450) interacts with L-aspartate. Glu-484 is an ATP binding site. Residue Arg-491 participates in L-aspartate binding. 536-539 (GLDR) is a binding site for ATP.

The protein belongs to the class-II aminoacyl-tRNA synthetase family. Type 1 subfamily. Homodimer.

It is found in the cytoplasm. The enzyme catalyses tRNA(Asx) + L-aspartate + ATP = L-aspartyl-tRNA(Asx) + AMP + diphosphate. In terms of biological role, aspartyl-tRNA synthetase with relaxed tRNA specificity since it is able to aspartylate not only its cognate tRNA(Asp) but also tRNA(Asn). Reaction proceeds in two steps: L-aspartate is first activated by ATP to form Asp-AMP and then transferred to the acceptor end of tRNA(Asp/Asn). The sequence is that of Aspartate--tRNA(Asp/Asn) ligase from Nitrosomonas eutropha (strain DSM 101675 / C91 / Nm57).